Here is a 360-residue protein sequence, read N- to C-terminus: NAD(P)H-quinone oxidoreductase subunit 1, chloroplastic (360 aa).

Transmembrane regions (helical) follow at residues 27–47 (IWIFVPIFSLVLGIITGVLVI), 98–118 (FSIGPSIAVISILLSYSVIPF), 129–149 (IGIFLWIAISSIAPIGLLMSG), 165–185 (AAQSISYEIPLTLCVLSISLL), 203–223 (FWGWNLWRQPIGFIIFLISSL), 248–268 (YSGIKFGLFYVASYLNLLISS), 269–289 (LFVTVLYLGGWNISIPYISIL), 297–317 (IFGTTICIFITLAKTYLFLFI), and 340–360 (FLLPISLGNLLLTTSFQLFSL).

The protein belongs to the complex I subunit 1 family. NDH is composed of at least 16 different subunits, 5 of which are encoded in the nucleus.

Its subcellular location is the plastid. It localises to the chloroplast thylakoid membrane. The catalysed reaction is a plastoquinone + NADH + (n+1) H(+)(in) = a plastoquinol + NAD(+) + n H(+)(out). It catalyses the reaction a plastoquinone + NADPH + (n+1) H(+)(in) = a plastoquinol + NADP(+) + n H(+)(out). NDH shuttles electrons from NAD(P)H:plastoquinone, via FMN and iron-sulfur (Fe-S) centers, to quinones in the photosynthetic chain and possibly in a chloroplast respiratory chain. The immediate electron acceptor for the enzyme in this species is believed to be plastoquinone. Couples the redox reaction to proton translocation, and thus conserves the redox energy in a proton gradient. The protein is NAD(P)H-quinone oxidoreductase subunit 1, chloroplastic of Olimarabidopsis pumila (Dwarf rocket).